A 176-amino-acid polypeptide reads, in one-letter code: Dual-action ribosomal maturation protein DarP (176 aa).

The protein belongs to the DarP family.

The protein localises to the cytoplasm. Functionally, member of a network of 50S ribosomal subunit biogenesis factors which assembles along the 30S-50S interface, preventing incorrect 23S rRNA structures from forming. Promotes peptidyl transferase center (PTC) maturation. The protein is Dual-action ribosomal maturation protein DarP of Haemophilus ducreyi (strain 35000HP / ATCC 700724).